The chain runs to 346 residues: Low specificity L-threonine aldolase (346 aa).

K207 bears the N6-(pyridoxal phosphate)lysine mark.

The protein belongs to the threonine aldolase family. In terms of assembly, homotetramer. The cofactor is pyridoxal 5'-phosphate.

It catalyses the reaction L-threonine = acetaldehyde + glycine. It carries out the reaction L-allo-threonine = acetaldehyde + glycine. Its function is as follows. Catalyzes the cleavage of L-allo-threonine and L-threonine to glycine and acetaldehyde. Can also act on L-erythro-phenylserine, L-threo-phenylserine, L-beta-3,4-methylenedioxyphenylserine and L-beta-3,4-dihydroxyphenylserine. This is Low specificity L-threonine aldolase (ltaE) from Pseudomonas sp. (strain NCIMB 10558).